The sequence spans 389 residues: F-box protein At3g19880 (389 aa).

The F-box domain maps to 2-49; sequence TMMSDLTQDLVEEILSRVPITSLGAVRSTCKGWNALSKERILCIGEPK.

In Arabidopsis thaliana (Mouse-ear cress), this protein is F-box protein At3g19880.